The sequence spans 152 residues: MGDFGYSFEGYDPTRHVRASLREKQISHKHAREISLHIRGMTVEKARDFLQAVIEKKRAVPFRRFKRQVGHRSDPGVMAGRYPEKSAAEFIKLLDNLESNAEYKGMDLDRLTIVGAVAHKGILIKRFIPRAMGRSTPKNNVLTHVELVAREA.

It belongs to the universal ribosomal protein uL22 family. Part of the 50S ribosomal subunit.

This protein binds specifically to 23S rRNA. It makes multiple contacts with different domains of the 23S rRNA in the assembled 50S subunit and ribosome. Its function is as follows. The globular domain of the protein is located near the polypeptide exit tunnel on the outside of the subunit, while an extended beta-hairpin is found that lines the wall of the exit tunnel in the center of the 70S ribosome. This chain is Large ribosomal subunit protein uL22, found in Cenarchaeum symbiosum (strain A).